The following is an 878-amino-acid chain: Probable outer membrane protein PmpI (878 aa).

The N-terminal stretch at 1-24 (MRPDHMNFCCLCAAILSSTAVLFG) is a signal peptide. Positions 360-371 (SSKESPLPSSLQ) are enriched in low complexity. The disordered stretch occupies residues 360–381 (SSKESPLPSSLQASVTSPTPAT). Positions 372–381 (ASVTSPTPAT) are enriched in polar residues. Residues 602-878 (GGAYLFGTWG…SLDLGTTYRF (277 aa)) form the Autotransporter domain.

This sequence belongs to the PMP outer membrane protein family.

Its subcellular location is the secreted. The protein localises to the cell wall. The protein resides in the cell outer membrane. This is Probable outer membrane protein PmpI (pmpI) from Chlamydia trachomatis serovar D (strain ATCC VR-885 / DSM 19411 / UW-3/Cx).